Here is a 151-residue protein sequence, read N- to C-terminus: Putative transcriptional regulatory protein TK2151 (151 aa).

It belongs to the Tfx family.

In terms of biological role, putative transcriptional regulator. In Thermococcus kodakarensis (strain ATCC BAA-918 / JCM 12380 / KOD1) (Pyrococcus kodakaraensis (strain KOD1)), this protein is Putative transcriptional regulatory protein TK2151.